The following is a 313-amino-acid chain: 1-phosphofructokinase (313 aa).

Residues 222–227 and 254–255 contribute to the ATP site; these read SMGAKG and GD. Aspartate 255 (proton acceptor) is an active-site residue.

The protein belongs to the carbohydrate kinase PfkB family.

The catalysed reaction is beta-D-fructose 1-phosphate + ATP = beta-D-fructose 1,6-bisphosphate + ADP + H(+). Its function is as follows. Catalyzes the ATP-dependent phosphorylation of fructose-l-phosphate to fructose-l,6-bisphosphate. The polypeptide is 1-phosphofructokinase (fruK) (Haemophilus influenzae (strain ATCC 51907 / DSM 11121 / KW20 / Rd)).